Reading from the N-terminus, the 437-residue chain is Double-stranded RNA-binding protein 3 (437 aa).

A disordered region spans residues 1–22; sequence MKKKSAPTPLPPETANTSPAPI. 2 DRBM domains span residues 35–104 and 120–187; these read VFKS…EIVK and LCKN…AIQG. Basic and acidic residues-rich tracts occupy residues 288–310 and 320–330; these read AKRV…ENQH and DEARVEQEPSR. A disordered region spans residues 288–331; it reads AKRVEDEPPRDIEMVQPDKENQHSDAALVQPDDEARVEQEPSRD.

Functionally, binds double-stranded RNA. The polypeptide is Double-stranded RNA-binding protein 3 (DRB3) (Oryza sativa subsp. japonica (Rice)).